A 77-amino-acid chain; its full sequence is Large ribosomal subunit protein bL28 (77 aa).

The protein belongs to the bacterial ribosomal protein bL28 family.

This Polynucleobacter necessarius subsp. necessarius (strain STIR1) protein is Large ribosomal subunit protein bL28.